Here is a 304-residue protein sequence, read N- to C-terminus: Tyrosine recombinase XerD (304 aa).

One can recognise a Core-binding (CB) domain in the interval 1 to 92 (MKARVLAKTW…VARGLHKFAL (92 aa)). Residues 113–298 (HLPDTLSINE…TADSLREVWR (186 aa)) form the Tyr recombinase domain. Catalysis depends on residues Arg156, Lys180, His250, Arg253, and His276. Tyr285 acts as the O-(3'-phospho-DNA)-tyrosine intermediate in catalysis.

This sequence belongs to the 'phage' integrase family. XerD subfamily. As to quaternary structure, forms a cyclic heterotetrameric complex composed of two molecules of XerC and two molecules of XerD.

It is found in the cytoplasm. Site-specific tyrosine recombinase, which acts by catalyzing the cutting and rejoining of the recombining DNA molecules. The XerC-XerD complex is essential to convert dimers of the bacterial chromosome into monomers to permit their segregation at cell division. It also contributes to the segregational stability of plasmids. The sequence is that of Tyrosine recombinase XerD from Corynebacterium glutamicum (strain ATCC 13032 / DSM 20300 / JCM 1318 / BCRC 11384 / CCUG 27702 / LMG 3730 / NBRC 12168 / NCIMB 10025 / NRRL B-2784 / 534).